Here is a 678-residue protein sequence, read N- to C-terminus: Exoribonuclease 2 (678 aa).

The RNB domain occupies 193 to 521; the sequence is REDLTALPFV…INHRLLKAHI (329 aa). In terms of domain architecture, S1 motif spans 568-650; the sequence is ETRFQAEIFD…ENRSLVGKPT (83 aa). Residues 658–678 form a disordered region; that stretch reads SETQTSTEQPAEGAENNEPQA.

It belongs to the RNR ribonuclease family. RNase II subfamily.

It localises to the cytoplasm. The catalysed reaction is Exonucleolytic cleavage in the 3'- to 5'-direction to yield nucleoside 5'-phosphates.. In terms of biological role, involved in mRNA degradation. Hydrolyzes single-stranded polyribonucleotides processively in the 3' to 5' direction. The protein is Exoribonuclease 2 of Vibrio cholerae serotype O1 (strain ATCC 39541 / Classical Ogawa 395 / O395).